The chain runs to 117 residues: MNLLDNVDAASLRTDVPDFRAGDTLNVHVKVVEGNRSRVQVFKGIVIRRTGGGIREAFTVRKVSFGVGVERTFPLHTPIIDKIEVVTRGDVKRAKLYYLRDLRGKAAKIKERREPRG.

Belongs to the bacterial ribosomal protein bL19 family.

Functionally, this protein is located at the 30S-50S ribosomal subunit interface and may play a role in the structure and function of the aminoacyl-tRNA binding site. The polypeptide is Large ribosomal subunit protein bL19 (Kineococcus radiotolerans (strain ATCC BAA-149 / DSM 14245 / SRS30216)).